Here is a 1135-residue protein sequence, read N- to C-terminus: DNA-directed RNA polymerase I subunit RPA2 (1135 aa).

A disordered region spans residues 1–26 (MDVDGRWRNLPSGPSLKHLTDPSYGI). Arginine 180 contributes to the RNA binding site. Positions 194-208 (VRPKWKSRGLGYTQF) are loop B. A loop A region spans residues 236-247 (LNFIYRKELFFL). An RNA-binding site is contributed by aspartate 367. 2 fork loop regions span residues 439 to 453 (LRSKTGLGFLQDSGL) and 474 to 489 (RGAAFAKMRTTTVRRL). Residue aspartate 755 coordinates Mg(2+). Lysine 890 contributes to the RNA binding site. Lysine 1020 and arginine 1036 together coordinate DNA. A Phosphoserine modification is found at serine 1051. Positions 1070, 1073, 1098, and 1101 each coordinate Zn(2+). The C4-type zinc finger occupies 1070-1101 (CVECGSLLSPLLEKPPPSWSAMRNRKYNCTVC).

Belongs to the RNA polymerase beta chain family. As to quaternary structure, component of the RNA polymerase I (Pol I) complex consisting of 13 subunits: a ten-subunit catalytic core composed of POLR1A/RPA1, POLR1B/RPA2, POLR1C/RPAC1, POLR1D/RPAC2, POLR1H/RPA12, POLR2E/RPABC1, POLR2F/RPABC2, POLR2H/RPABC3, POLR2K/RPABC4 and POLR2L/RPABC5; a mobile stalk subunit POLR1F/RPA43 protruding from the core and additional subunits homologous to general transcription factors POLR1E/RPA49 and POLR1G/RPA34. Part of Pol I pre-initiation complex (PIC), in which Pol I core assembles with RRN3 and promoter-bound UTBF and SL1/TIF-IB complex. The cofactor is Mg(2+).

Its subcellular location is the nucleus. It is found in the nucleolus. The protein resides in the chromosome. It carries out the reaction RNA(n) + a ribonucleoside 5'-triphosphate = RNA(n+1) + diphosphate. Catalytic core component of RNA polymerase I (Pol I), a DNA-dependent RNA polymerase which synthesizes ribosomal RNA precursors using the four ribonucleoside triphosphates as substrates. Transcribes 47S pre-rRNAs from multicopy rRNA gene clusters, giving rise to 5.8S, 18S and 28S ribosomal RNAs. Pol I-mediated transcription cycle proceeds through transcription initiation, transcription elongation and transcription termination stages. During transcription initiation, Pol I pre-initiation complex (PIC) is recruited by the selectivity factor 1 (SL1/TIF-IB) complex bound to the core promoter that precedes an rDNA repeat unit. The PIC assembly bends the promoter favoring the formation of the transcription bubble and promoter escape. Once the polymerase has escaped from the promoter it enters the elongation phase during which RNA is actively polymerized, based on complementarity with the template DNA strand. Highly processive, assembles in structures referred to as 'Miller trees' where many elongating Pol I complexes queue and transcribe the same rDNA coding regions. At terminator sequences downstream of the rDNA gene, PTRF interacts with Pol I and halts Pol I transcription leading to the release of the RNA transcript and polymerase from the DNA. Forms Pol I active center together with the largest subunit POLR1A/RPA1. Appends one nucleotide at a time to the 3' end of the nascent RNA, with POLR1A/RPA1 contributing a Mg(2+)-coordinating DxDGD motif, and POLR1B/RPA2 participating in the coordination of a second Mg(2+) ion and providing lysine residues believed to facilitate Watson-Crick base pairing between the incoming nucleotide and the template base. Typically, Mg(2+) ions direct a 5' nucleoside triphosphate to form a phosphodiester bond with the 3' hydroxyl of the preceding nucleotide of the nascent RNA, with the elimination of pyrophosphate. Has proofreading activity: Pauses and backtracks to allow the cleavage of a missincorporated nucleotide via POLR1H/RPA12. High Pol I processivity is associated with decreased transcription fidelity. The protein is DNA-directed RNA polymerase I subunit RPA2 of Mus musculus (Mouse).